We begin with the raw amino-acid sequence, 382 residues long: uncharacterized protein (382 aa).

12 helical membrane passes run 14-34 (GLLLLTLAIAVLNTLVPLWLA), 45-65 (VVSSSYFTGNLVGTLLTGYVI), 79-99 (FIFAAGCAGLGLMIGFWSWLA), 102-122 (FVAGIGCAMIWVVVESALMCS), 131-151 (LLAAYMMVYYVGTFLGQLLVS), 157-177 (LMSVLPWVTGLTLAGILPLLF), 204-224 (LGVNGCIISGIVLGSLYGLMP), 235-255 (ASIGFWMAVLVSAGILGQWPI), 270-290 (VQVFVVILGSIAMLSQAAMAP), 291-311 (ALFILGAAGFTLYPVAMAWAC), 325-345 (ALLLSYTVGSLLGPSFTAMLM), and 348-368 (FSDNLLFIMIASVSFIYLLML).

This sequence belongs to the major facilitator superfamily. YcaD (TC 2.A.1.26) family.

Its subcellular location is the cell inner membrane. This is an uncharacterized protein from Escherichia coli O45:K1 (strain S88 / ExPEC).